The primary structure comprises 668 residues: UvrABC system protein B (668 aa).

The region spanning 25 to 413 (NGINTGLQHQ…QNTVQQVIRP (389 aa)) is the Helicase ATP-binding domain. 38–45 (GVTGSGKT) is an ATP binding site. Positions 91–114 (YYDYYQPEAYIAASDTYIEKDSSV) match the Beta-hairpin motif. Positions 429–595 (QVEDALSEIN…TIIKNIDDML (167 aa)) constitute a Helicase C-terminal domain. A UVR domain is found at 629–664 (TKVIKALEKRMRAYAKELEFEKATTIRDKITEVKQK).

Belongs to the UvrB family. As to quaternary structure, forms a heterotetramer with UvrA during the search for lesions. Interacts with UvrC in an incision complex.

The protein resides in the cytoplasm. The UvrABC repair system catalyzes the recognition and processing of DNA lesions. A damage recognition complex composed of 2 UvrA and 2 UvrB subunits scans DNA for abnormalities. Upon binding of the UvrA(2)B(2) complex to a putative damaged site, the DNA wraps around one UvrB monomer. DNA wrap is dependent on ATP binding by UvrB and probably causes local melting of the DNA helix, facilitating insertion of UvrB beta-hairpin between the DNA strands. Then UvrB probes one DNA strand for the presence of a lesion. If a lesion is found the UvrA subunits dissociate and the UvrB-DNA preincision complex is formed. This complex is subsequently bound by UvrC and the second UvrB is released. If no lesion is found, the DNA wraps around the other UvrB subunit that will check the other stand for damage. The chain is UvrABC system protein B from Francisella tularensis subsp. tularensis (strain SCHU S4 / Schu 4).